The chain runs to 261 residues: Undecaprenyl-diphosphatase 2 (261 aa).

8 helical membrane-spanning segments follow: residues 1–21 (MLEA…PISS), 38–58 (PGKT…CVVF), 75–95 (FAFA…GATL), 103–123 (LESP…ILVI), 138–158 (MSPA…VPGV), 178–198 (AAEF…AYSL), 212–232 (LIAL…KGFI), and 240–260 (FAPF…LILM).

This sequence belongs to the UppP family.

The protein localises to the cell inner membrane. It catalyses the reaction di-trans,octa-cis-undecaprenyl diphosphate + H2O = di-trans,octa-cis-undecaprenyl phosphate + phosphate + H(+). Catalyzes the dephosphorylation of undecaprenyl diphosphate (UPP). Confers resistance to bacitracin. The protein is Undecaprenyl-diphosphatase 2 of Paramagnetospirillum magneticum (strain ATCC 700264 / AMB-1) (Magnetospirillum magneticum).